A 170-amino-acid polypeptide reads, in one-letter code: MIDHALALTHIDERGAARMVDVSEKPVTLRVAKASGLVIMKPSTLRMISDGAAAKGDVMAAARIAGIAAAKRTGDLIPLCHPLGLDAVSVTITPCEPDRVKILATTTTLGRTGVEMEALTAVSVAALTIYDMCKAVDRAMEISQIVLQEKSGGRSGVYRRSASDLACQSR.

Residues 79 to 81 and 116 to 117 contribute to the substrate site; these read LCH and ME. Asp-131 is an active-site residue.

The protein belongs to the MoaC family. In terms of assembly, homohexamer; trimer of dimers.

It catalyses the reaction (8S)-3',8-cyclo-7,8-dihydroguanosine 5'-triphosphate = cyclic pyranopterin phosphate + diphosphate. Its pathway is cofactor biosynthesis; molybdopterin biosynthesis. Catalyzes the conversion of (8S)-3',8-cyclo-7,8-dihydroguanosine 5'-triphosphate to cyclic pyranopterin monophosphate (cPMP). The chain is Cyclic pyranopterin monophosphate synthase 1 (moaC1) from Mycobacterium bovis (strain ATCC BAA-935 / AF2122/97).